A 172-amino-acid polypeptide reads, in one-letter code: Shikimate kinase (172 aa).

17–22 serves as a coordination point for ATP; it reads GTGKST. Ser21 is a binding site for Mg(2+). Residues Asp39, Arg63, and Gly84 each coordinate substrate. Arg122 is an ATP binding site. Arg140 serves as a coordination point for substrate.

The protein belongs to the shikimate kinase family. In terms of assembly, monomer. The cofactor is Mg(2+).

The protein localises to the cytoplasm. The enzyme catalyses shikimate + ATP = 3-phosphoshikimate + ADP + H(+). The protein operates within metabolic intermediate biosynthesis; chorismate biosynthesis; chorismate from D-erythrose 4-phosphate and phosphoenolpyruvate: step 5/7. Functionally, catalyzes the specific phosphorylation of the 3-hydroxyl group of shikimic acid using ATP as a cosubstrate. The protein is Shikimate kinase of Staphylococcus haemolyticus (strain JCSC1435).